We begin with the raw amino-acid sequence, 437 residues long: Elongation factor 1-gamma (437 aa).

Residue A2 is modified to N-acetylalanine. A GST N-terminal domain is found at 2–87 (AAGTLYTYPE…YVSNEELRGS (86 aa)). The GST C-terminal domain maps to 88–216 (TPEAAAQVVQ…VKLCEKMAQF (129 aa)). N6-acetyllysine occurs at positions 147 and 212. The segment covering 221-254 (FAESQPKKDTPRKEKGSREEKQKPQAERKEEKKA) has biased composition (basic and acidic residues). The interval 221-268 (FAESQPKKDTPRKEKGSREEKQKPQAERKEEKKAAAPAPEEEMDECEQ) is disordered. Residue K253 forms a Glycyl lysine isopeptide (Lys-Gly) (interchain with G-Cter in SUMO1) linkage. The EF-1-gamma C-terminal domain occupies 276–437 (AKDPFAHLPK…KAFNQGKIFK (162 aa)). K285 participates in a covalent cross-link: Glycyl lysine isopeptide (Lys-Gly) (interchain with G-Cter in SUMO2). The residue at position 401 (K401) is an N6-acetyllysine. K434 carries the post-translational modification N6-acetyllysine; alternate. K434 carries the post-translational modification N6-malonyllysine; alternate.

EF-1 is composed of four subunits: alpha, beta, delta, and gamma.

Functionally, probably plays a role in anchoring the complex to other cellular components. The polypeptide is Elongation factor 1-gamma (EEF1G) (Equus caballus (Horse)).